Here is a 605-residue protein sequence, read N- to C-terminus: Glycerophosphodiester phosphodiesterase domain-containing protein 5 (605 aa).

Residues 1–42 (MVRHQPLQYYEPQLCLSCLTGIYGCRWKRYQRSHDDTTPWER) are Cytoplasmic-facing. Disulfide bonds link C15/C18 and C25/C571. The chain crosses the membrane as a helical span at residues 43–63 (LWFLLLTFTFGLTLTWLYFWW). At 64 to 89 (EVHNDYDEFNWYLYNRMGYWSDWPVP) the chain is on the extracellular side. Residues 90 to 110 (ILVTTAAAFAYIAGLLVLALC) traverse the membrane as a helical segment. Residues 111-125 (HIAVGQQMNLHWLHK) lie on the Cytoplasmic side of the membrane. A helical transmembrane segment spans residues 126 to 146 (IGLVVILASTVVAMSAVAQLW). The Extracellular portion of the chain corresponds to 147–160 (EDEWEVLLISLQGT). The helical transmembrane segment at 161–181 (APFLHVGAVAAVTMLSWIVAG) threads the bilayer. Residues 182 to 192 (QFARAERTSSQ) lie on the Cytoplasmic side of the membrane. A helical membrane pass occupies residues 193 to 213 (VTILCTFFTVVFALYLAPLTI). Topologically, residues 214–496 (SSPCIMEKKD…PLWIMPPDEY (283 aa)) are extracellular. The GP-PDE domain maps to 228–485 (PALIGHRGAP…DNSHALSQVP (258 aa)). N-linked (GlcNAc...) asparagine glycans are attached at residues N301, N336, N352, N374, and N448. A helical transmembrane segment spans residues 497–517 (CLMWVTADLVSFTLIVGIFVL). Residues 518-605 (QKWRLGGIRS…TKTLIERSGR (88 aa)) lie on the Cytoplasmic side of the membrane. The tract at residues 582–605 (STATPVGPRGGGSHTKTLIERSGR) is disordered.

This sequence belongs to the glycerophosphoryl diester phosphodiesterase family. In terms of assembly, interacts with PRDX1; forms a mixed-disulfide with PRDX1, leading to disrupt intramolecular disulfide bond between Cys-25 and Cys-571. Intramolecular disulfide bond between Cys-25 and Cys-571 is reduced by PRDX1.

The protein resides in the endomembrane system. Its subcellular location is the cytoplasm. It is found in the perinuclear region. The protein localises to the cell projection. It localises to the growth cone. It catalyses the reaction a 1,2-diacyl-sn-glycero-3-phospho-(1D-myo-inositol-4,5-bisphosphate) + H2O = 1D-myo-inositol 1,4,5-trisphosphate + a 1,2-diacyl-sn-glycerol + H(+). It carries out the reaction sn-glycerol 3-phosphocholine + H2O = sn-glycerol 3-phosphate + choline + H(+). Functionally, glycerophosphodiester phosphodiesterase that promotes neurite formation and drives spinal motor neuron differentiation. Mediates the cleavage of glycosylphosphatidylinositol (GPI) anchor of target proteins: removes the GPI-anchor of RECK, leading to release RECK from the plasma membrane. May contribute to the osmotic regulation of cellular glycerophosphocholine. The polypeptide is Glycerophosphodiester phosphodiesterase domain-containing protein 5 (Homo sapiens (Human)).